We begin with the raw amino-acid sequence, 359 residues long: DNA polymerase IV (359 aa).

A UmuC domain is found at 7-188 (IIHIDMDAFY…LPIGKFFGVG (182 aa)). Residues D11 and D106 each contribute to the Mg(2+) site. E107 is a catalytic residue.

The protein belongs to the DNA polymerase type-Y family. Monomer. The cofactor is Mg(2+).

It localises to the cytoplasm. The enzyme catalyses DNA(n) + a 2'-deoxyribonucleoside 5'-triphosphate = DNA(n+1) + diphosphate. Functionally, poorly processive, error-prone DNA polymerase involved in untargeted mutagenesis. Copies undamaged DNA at stalled replication forks, which arise in vivo from mismatched or misaligned primer ends. These misaligned primers can be extended by PolIV. Exhibits no 3'-5' exonuclease (proofreading) activity. May be involved in translesional synthesis, in conjunction with the beta clamp from PolIII. The sequence is that of DNA polymerase IV from Clostridium perfringens (strain SM101 / Type A).